The following is a 118-amino-acid chain: Large ribosomal subunit protein uL24 (118 aa).

It belongs to the universal ribosomal protein uL24 family. As to quaternary structure, part of the 50S ribosomal subunit.

In terms of biological role, one of two assembly initiator proteins, it binds directly to the 5'-end of the 23S rRNA, where it nucleates assembly of the 50S subunit. Its function is as follows. One of the proteins that surrounds the polypeptide exit tunnel on the outside of the subunit. In Prochlorococcus marinus subsp. pastoris (strain CCMP1986 / NIES-2087 / MED4), this protein is Large ribosomal subunit protein uL24.